Reading from the N-terminus, the 476-residue chain is Cys-Gly metallodipeptidase dug1 (476 aa).

His-99 is a Zn(2+) binding site. Asp-101 is a catalytic residue. Asp-133 is a Zn(2+) binding site. Glu-167 serves as the catalytic Proton acceptor. Zn(2+) contacts are provided by Glu-168, Asp-196, and His-446.

This sequence belongs to the peptidase M20A family. In terms of assembly, homodimer. Component of the GSH degradosomal complex. The cofactor is Zn(2+). It depends on Mn(2+) as a cofactor.

It localises to the cytoplasm. Functionally, catalytic component of the GSH degradosomal complex involved in the degradation of glutathione (GSH) and other peptides containing a gamma-glu-X bond. Has a Gly-Cys dipeptidase activity. The polypeptide is Cys-Gly metallodipeptidase dug1 (dug1) (Schizosaccharomyces pombe (strain 972 / ATCC 24843) (Fission yeast)).